Consider the following 334-residue polypeptide: DNA-directed RNA polymerase subunit alpha (334 aa).

The interval 1 to 234 is alpha N-terminal domain (alpha-NTD); it reads MQRSVHELLT…QQLAVFVDFD (234 aa). The alpha C-terminal domain (alpha-CTD) stretch occupies residues 248–334; the sequence is IDPILLRPVD…LRGDDRVLGG (87 aa).

This sequence belongs to the RNA polymerase alpha chain family. As to quaternary structure, homodimer. The RNAP catalytic core consists of 2 alpha, 1 beta, 1 beta' and 1 omega subunit. When a sigma factor is associated with the core the holoenzyme is formed, which can initiate transcription.

It carries out the reaction RNA(n) + a ribonucleoside 5'-triphosphate = RNA(n+1) + diphosphate. In terms of biological role, DNA-dependent RNA polymerase catalyzes the transcription of DNA into RNA using the four ribonucleoside triphosphates as substrates. This chain is DNA-directed RNA polymerase subunit alpha, found in Marinobacter nauticus (strain ATCC 700491 / DSM 11845 / VT8) (Marinobacter aquaeolei).